The primary structure comprises 1093 residues: Receptor-mediated endocytosis protein 6 (1093 aa).

The 234-residue stretch at 156 to 389 (LKIAQVVCNL…EMMDALLVEK (234 aa)) folds into the Ras-GAP domain. 2 disordered regions span residues 547–610 (DLEK…GGEQ) and 643–669 (RSGSFVKPPPSGIPTSSSEQNLPDVAT). Composition is skewed to polar residues over residues 568-577 (IDFSSGSAET) and 584-598 (DSTSVSPEPLTSTEE). Positions 955–1093 (HHRDKLLRGT…SAVEYIKTIL (139 aa)) constitute a VPS9 domain.

Belongs to the GAPVD1 family. As to quaternary structure, interacts with GDP-bound rab-5. Interacts with alpha-adaptin.

The protein localises to the membrane. Its subcellular location is the cytoplasmic vesicle. It is found in the clathrin-coated vesicle. Its function is as follows. Acts both as a GTPase-activating protein (GAP) and a guanine nucleotide exchange factor (GEF), and participates in endocytosis. Acts by regulating the activation of rab-5 by exchanging bound GDP for free GTP at clathrin coated pits. In Caenorhabditis elegans, this protein is Receptor-mediated endocytosis protein 6 (rme-6).